The chain runs to 365 residues: Popy Class I histocompatibility antigen, A-1 alpha chain (365 aa).

The first 24 residues, 1–24 (MAIMAPRTLLLLLSGALALTQTWA), serve as a signal peptide directing secretion. An alpha-1 region spans residues 25–114 (GSHSMRYFST…LRGYYNQSDG (90 aa)). Over 25 to 308 (GSHSMRYFST…ELSSQPTIPI (284 aa)) the chain is Extracellular. An N-linked (GlcNAc...) asparagine glycan is attached at Asn-110. The tract at residues 115 to 206 (GSHTIQRMFG…ENGKETLQRT (92 aa)) is alpha-2. 2 disulfides stabilise this stretch: Cys-125–Cys-188 and Cys-227–Cys-283. Positions 207 to 298 (DAPKTHMTHH…GLPEPLTLRW (92 aa)) are alpha-3. One can recognise an Ig-like C1-type domain in the interval 209 to 297 (PKTHMTHHPV…EGLPEPLTLR (89 aa)). Residues 299-308 (ELSSQPTIPI) form a connecting peptide region. A helical membrane pass occupies residues 309–332 (VGIIAGLVLLGAVITGAVVAAVMW). The Cytoplasmic segment spans residues 333–365 (RRRNSDRKGGSYSQAASNDSAQGSDVSLTACKV). The segment at 340–365 (KGGSYSQAASNDSAQGSDVSLTACKV) is disordered. Residue Ser-343 is modified to Phosphoserine. Residues 343–359 (SYSQAASNDSAQGSDVS) are compositionally biased toward polar residues. At Tyr-344 the chain carries Phosphotyrosine. A phosphoserine mark is found at Ser-345, Ser-349, Ser-352, Ser-356, and Ser-359.

It belongs to the MHC class I family. As to quaternary structure, heterodimer of an alpha chain and a beta chain (beta-2-microglobulin).

It is found in the membrane. Functionally, involved in the presentation of foreign antigens to the immune system. The sequence is that of Popy Class I histocompatibility antigen, A-1 alpha chain from Pongo pygmaeus (Bornean orangutan).